We begin with the raw amino-acid sequence, 594 residues long: Alanine--tRNA ligase (594 aa).

Positions 456, 460, 558, and 562 each coordinate Zn(2+).

Belongs to the class-II aminoacyl-tRNA synthetase family. The cofactor is Zn(2+).

It localises to the cytoplasm. It carries out the reaction tRNA(Ala) + L-alanine + ATP = L-alanyl-tRNA(Ala) + AMP + diphosphate. Functionally, catalyzes the attachment of alanine to tRNA(Ala) in a two-step reaction: alanine is first activated by ATP to form Ala-AMP and then transferred to the acceptor end of tRNA(Ala). Also edits incorrectly charged Ser-tRNA(Ala) and Gly-tRNA(Ala) via its editing domain. The polypeptide is Alanine--tRNA ligase (alaS) (Borreliella burgdorferi (strain ATCC 35210 / DSM 4680 / CIP 102532 / B31) (Borrelia burgdorferi)).